A 333-amino-acid polypeptide reads, in one-letter code: Holliday junction branch migration complex subunit RuvB (333 aa).

The large ATPase domain (RuvB-L) stretch occupies residues 1–182; it reads MDERLLSGES…FGVLSRLEYY (182 aa). ATP is bound by residues Leu-21, Arg-22, Gly-63, Lys-66, Thr-67, Thr-68, 129-131, Arg-172, Tyr-182, and Arg-219; that span reads EDF. Thr-67 is a binding site for Mg(2+). Residues 183–253 are small ATPAse domain (RuvB-S); that stretch reads TVDQLSEIVE…ITQMALELLQ (71 aa). A head domain (RuvB-H) region spans residues 256–333; sequence KLGLDHIDHK…EHFGMEMPKV (78 aa). Positions 311 and 316 each coordinate DNA.

This sequence belongs to the RuvB family. Homohexamer. Forms an RuvA(8)-RuvB(12)-Holliday junction (HJ) complex. HJ DNA is sandwiched between 2 RuvA tetramers; dsDNA enters through RuvA and exits via RuvB. An RuvB hexamer assembles on each DNA strand where it exits the tetramer. Each RuvB hexamer is contacted by two RuvA subunits (via domain III) on 2 adjacent RuvB subunits; this complex drives branch migration. In the full resolvosome a probable DNA-RuvA(4)-RuvB(12)-RuvC(2) complex forms which resolves the HJ.

The protein localises to the cytoplasm. The enzyme catalyses ATP + H2O = ADP + phosphate + H(+). Functionally, the RuvA-RuvB-RuvC complex processes Holliday junction (HJ) DNA during genetic recombination and DNA repair, while the RuvA-RuvB complex plays an important role in the rescue of blocked DNA replication forks via replication fork reversal (RFR). RuvA specifically binds to HJ cruciform DNA, conferring on it an open structure. The RuvB hexamer acts as an ATP-dependent pump, pulling dsDNA into and through the RuvAB complex. RuvB forms 2 homohexamers on either side of HJ DNA bound by 1 or 2 RuvA tetramers; 4 subunits per hexamer contact DNA at a time. Coordinated motions by a converter formed by DNA-disengaged RuvB subunits stimulates ATP hydrolysis and nucleotide exchange. Immobilization of the converter enables RuvB to convert the ATP-contained energy into a lever motion, pulling 2 nucleotides of DNA out of the RuvA tetramer per ATP hydrolyzed, thus driving DNA branch migration. The RuvB motors rotate together with the DNA substrate, which together with the progressing nucleotide cycle form the mechanistic basis for DNA recombination by continuous HJ branch migration. Branch migration allows RuvC to scan DNA until it finds its consensus sequence, where it cleaves and resolves cruciform DNA. This is Holliday junction branch migration complex subunit RuvB from Bacillus cereus (strain ATCC 10987 / NRS 248).